The primary structure comprises 36 residues: Pancreatic polypeptide (36 aa).

Y36 is subject to Tyrosine amide.

Belongs to the NPY family.

It is found in the secreted. Its function is as follows. Hormone secreted by pancreatic cells that acts as a regulator of pancreatic and gastrointestinal functions probably by signaling through the G protein-coupled receptor NPY4R2. In Equus przewalskii (Przewalski's horse), this protein is Pancreatic polypeptide (PPY).